Here is a 239-residue protein sequence, read N- to C-terminus: Exosome complex component Rrp4 (239 aa).

One can recognise an S1 motif domain in the interval Gly-67–Leu-139. The KH domain occupies Gln-151–Glu-217.

This sequence belongs to the RRP4 family. Component of the archaeal exosome complex. Forms a trimer of Rrp4 and/or Csl4 subunits. The trimer associates with a hexameric ring-like arrangement composed of 3 Rrp41-Rrp42 heterodimers.

It is found in the cytoplasm. Its function is as follows. Non-catalytic component of the exosome, which is a complex involved in RNA degradation. Increases the RNA binding and the efficiency of RNA degradation. Confers strong poly(A) specificity to the exosome. In Methanopyrus kandleri (strain AV19 / DSM 6324 / JCM 9639 / NBRC 100938), this protein is Exosome complex component Rrp4.